A 186-amino-acid polypeptide reads, in one-letter code: Lipid A acyltransferase PagP (186 aa).

The N-terminal stretch at 1-19 (MKRLISCLTIICALNRSAA) is a signal peptide. Residues H60, D103, and S104 contribute to the active site.

Belongs to the lipid A palmitoyltransferase family. As to quaternary structure, homodimer.

The protein resides in the cell outer membrane. The catalysed reaction is a lipid A + a 1,2-diacyl-sn-glycero-3-phosphocholine = a hepta-acyl lipid A + a 2-acyl-sn-glycero-3-phosphocholine. The enzyme catalyses a lipid IVA + a 1,2-diacyl-sn-glycero-3-phosphocholine = a lipid IVB + a 2-acyl-sn-glycero-3-phosphocholine. It catalyses the reaction a lipid IIA + a 1,2-diacyl-sn-glycero-3-phosphocholine = a lipid IIB + a 2-acyl-sn-glycero-3-phosphocholine. Its function is as follows. Transfers a fatty acid residue from the sn-1 position of a phospholipid to the N-linked hydroxyfatty acid chain on the proximal unit of lipid A or its precursors. Confers resistance to cationic antimicrobial peptides (CAMPs). Promotes the ability of L.pneumophila to replicate and/or survive in macrophages. Important for ability to kill macrophages and to promote the virulence. In Legionella pneumophila, this protein is Lipid A acyltransferase PagP.